Here is a 444-residue protein sequence, read N- to C-terminus: UDP-N-acetylglucosamine 1-carboxyvinyltransferase (444 aa).

22-23 (KN) is a phosphoenolpyruvate binding site. A UDP-N-acetyl-alpha-D-glucosamine-binding site is contributed by Arg94. Asp119 (proton donor) is an active-site residue. UDP-N-acetyl-alpha-D-glucosamine is bound by residues Asp309 and Val331.

This sequence belongs to the EPSP synthase family. MurA subfamily.

Its subcellular location is the cytoplasm. It carries out the reaction phosphoenolpyruvate + UDP-N-acetyl-alpha-D-glucosamine = UDP-N-acetyl-3-O-(1-carboxyvinyl)-alpha-D-glucosamine + phosphate. The protein operates within cell wall biogenesis; peptidoglycan biosynthesis. Its function is as follows. Cell wall formation. Adds enolpyruvyl to UDP-N-acetylglucosamine. This is UDP-N-acetylglucosamine 1-carboxyvinyltransferase from Chlamydia trachomatis serovar D (strain ATCC VR-885 / DSM 19411 / UW-3/Cx).